A 124-amino-acid chain; its full sequence is Small ribosomal subunit protein uS11 (124 aa).

Belongs to the universal ribosomal protein uS11 family. Part of the 30S ribosomal subunit. Interacts with proteins S7 and S18. Binds to IF-3.

Its function is as follows. Located on the platform of the 30S subunit, it bridges several disparate RNA helices of the 16S rRNA. Forms part of the Shine-Dalgarno cleft in the 70S ribosome. The polypeptide is Small ribosomal subunit protein uS11 (Sulfurovum sp. (strain NBC37-1)).